A 148-amino-acid polypeptide reads, in one-letter code: MSMVKEFKEFALKGNVMDLAVGVIIGGAFSTIVNSIVKDLIMPVVGLATGGLDFSNKFVRLGPIPPTFKGSPESYKDLQTAGVAVFGYGSFITVLINFLILAFIIFLMVKFINNLRKPAEAAPAAPPPPPEDVLLLREIRDSLKNSPR.

2 consecutive transmembrane segments (helical) span residues 16-36 and 89-109; these read VMDLAVGVIIGGAFSTIVNSI and GSFITVLINFLILAFIIFLMV.

This sequence belongs to the MscL family. Homopentamer.

It is found in the cell inner membrane. In terms of biological role, channel that opens in response to stretch forces in the membrane lipid bilayer. May participate in the regulation of osmotic pressure changes within the cell. The chain is Large-conductance mechanosensitive channel from Paraburkholderia phytofirmans (strain DSM 17436 / LMG 22146 / PsJN) (Burkholderia phytofirmans).